Reading from the N-terminus, the 329-residue chain is Ribonucleoside-diphosphate reductase small chain (329 aa).

Positions 75, 106, and 109 each coordinate Fe cation. The active site involves tyrosine 113. Glutamate 168, glutamate 202, and histidine 205 together coordinate Fe cation.

It belongs to the ribonucleoside diphosphate reductase small chain family. Heterodimer of a large and a small chain. Fe cation serves as cofactor.

The protein localises to the cytoplasm. The catalysed reaction is a 2'-deoxyribonucleoside 5'-diphosphate + [thioredoxin]-disulfide + H2O = a ribonucleoside 5'-diphosphate + [thioredoxin]-dithiol. In terms of biological role, provides the precursors necessary for DNA synthesis. Catalyzes the biosynthesis of deoxyribonucleotides from the corresponding ribonucleotides. The sequence is that of Ribonucleoside-diphosphate reductase small chain from Nicotiana tabacum (Common tobacco).